A 1115-amino-acid chain; its full sequence is Carbamoyl phosphate synthase large chain (1115 aa).

The interval Met-1–Glu-407 is carboxyphosphate synthetic domain. Residues Arg-134, Arg-174, Gly-180, Gly-181, Glu-213, Ile-215, Glu-220, Gly-246, Val-247, His-248, Gln-290, and Glu-304 each contribute to the ATP site. The ATP-grasp 1 domain occupies Lys-138–Ile-333. Mg(2+) is bound by residues Gln-290, Glu-304, and Asn-306. Mn(2+) is bound by residues Gln-290, Glu-304, and Asn-306. An oligomerization domain region spans residues Thr-408–Val-559. The segment at Ala-560–Tyr-965 is carbamoyl phosphate synthetic domain. The region spanning Gly-693 to Leu-884 is the ATP-grasp 2 domain. ATP-binding residues include Arg-729, Arg-768, Leu-770, Glu-775, Gly-800, Ile-801, His-802, Ser-803, Gln-843, and Glu-855. Mg(2+) contacts are provided by Gln-843, Glu-855, and Asn-857. Mn(2+) contacts are provided by Gln-843, Glu-855, and Asn-857. The MGS-like domain occupies Gly-966–Val-1113. Positions Gly-966 to Arg-1115 are allosteric domain.

This sequence belongs to the CarB family. As to quaternary structure, composed of two chains; the small (or glutamine) chain promotes the hydrolysis of glutamine to ammonia, which is used by the large (or ammonia) chain to synthesize carbamoyl phosphate. Tetramer of heterodimers (alpha,beta)4. Requires Mg(2+) as cofactor. It depends on Mn(2+) as a cofactor.

The catalysed reaction is hydrogencarbonate + L-glutamine + 2 ATP + H2O = carbamoyl phosphate + L-glutamate + 2 ADP + phosphate + 2 H(+). It catalyses the reaction hydrogencarbonate + NH4(+) + 2 ATP = carbamoyl phosphate + 2 ADP + phosphate + 2 H(+). It participates in amino-acid biosynthesis; L-arginine biosynthesis; carbamoyl phosphate from bicarbonate: step 1/1. The protein operates within pyrimidine metabolism; UMP biosynthesis via de novo pathway; (S)-dihydroorotate from bicarbonate: step 1/3. Its function is as follows. Large subunit of the glutamine-dependent carbamoyl phosphate synthetase (CPSase). CPSase catalyzes the formation of carbamoyl phosphate from the ammonia moiety of glutamine, carbonate, and phosphate donated by ATP, constituting the first step of 2 biosynthetic pathways, one leading to arginine and/or urea and the other to pyrimidine nucleotides. The large subunit (synthetase) binds the substrates ammonia (free or transferred from glutamine from the small subunit), hydrogencarbonate and ATP and carries out an ATP-coupled ligase reaction, activating hydrogencarbonate by forming carboxy phosphate which reacts with ammonia to form carbamoyl phosphate. This is Carbamoyl phosphate synthase large chain from Mycobacterium bovis (strain ATCC BAA-935 / AF2122/97).